An 842-amino-acid polypeptide reads, in one-letter code: Protein translocase subunit SecA (842 aa).

Residues Gln-85, 103 to 107, and Asp-493 each bind ATP; that span reads GEGKT. Residues Cys-825, Cys-827, Cys-836, and His-837 each contribute to the Zn(2+) site.

Belongs to the SecA family. In terms of assembly, monomer and homodimer. Part of the essential Sec protein translocation apparatus which comprises SecA, SecYEG and auxiliary proteins SecDF. Other proteins may also be involved. The cofactor is Zn(2+).

The protein resides in the cell membrane. The protein localises to the cytoplasm. The catalysed reaction is ATP + H2O + cellular proteinSide 1 = ADP + phosphate + cellular proteinSide 2.. Its function is as follows. Part of the Sec protein translocase complex. Interacts with the SecYEG preprotein conducting channel. Has a central role in coupling the hydrolysis of ATP to the transfer of proteins into and across the cell membrane, serving as an ATP-driven molecular motor driving the stepwise translocation of polypeptide chains across the membrane. This is Protein translocase subunit SecA from Streptococcus equi subsp. zooepidemicus (strain H70).